The sequence spans 227 residues: Urease accessory protein UreF (227 aa).

The protein belongs to the UreF family. In terms of assembly, ureD, UreF and UreG form a complex that acts as a GTP-hydrolysis-dependent molecular chaperone, activating the urease apoprotein by helping to assemble the nickel containing metallocenter of UreC. The UreE protein probably delivers the nickel.

It localises to the cytoplasm. In terms of biological role, required for maturation of urease via the functional incorporation of the urease nickel metallocenter. In Actinobacillus pleuropneumoniae serotype 5b (strain L20), this protein is Urease accessory protein UreF.